Reading from the N-terminus, the 458-residue chain is UDP-N-acetylmuramoylalanine--D-glutamate ligase (458 aa).

Position 124-130 (124-130 (GSDGKTT)) interacts with ATP.

This sequence belongs to the MurCDEF family.

The protein localises to the cytoplasm. It carries out the reaction UDP-N-acetyl-alpha-D-muramoyl-L-alanine + D-glutamate + ATP = UDP-N-acetyl-alpha-D-muramoyl-L-alanyl-D-glutamate + ADP + phosphate + H(+). The protein operates within cell wall biogenesis; peptidoglycan biosynthesis. Cell wall formation. Catalyzes the addition of glutamate to the nucleotide precursor UDP-N-acetylmuramoyl-L-alanine (UMA). This chain is UDP-N-acetylmuramoylalanine--D-glutamate ligase, found in Clostridium botulinum (strain ATCC 19397 / Type A).